The following is a 1201-amino-acid chain: DNA-directed RNA polymerase subunit beta' (1201 aa).

Zn(2+)-binding residues include C60, C62, C75, and C78. Residues D449, D451, and D453 each contribute to the Mg(2+) site. The Zn(2+) site is built by C818, C892, C899, and C902.

This sequence belongs to the RNA polymerase beta' chain family. As to quaternary structure, the RNAP catalytic core consists of 2 alpha, 1 beta, 1 beta' and 1 omega subunit. When a sigma factor is associated with the core the holoenzyme is formed, which can initiate transcription. It depends on Mg(2+) as a cofactor. Requires Zn(2+) as cofactor.

It carries out the reaction RNA(n) + a ribonucleoside 5'-triphosphate = RNA(n+1) + diphosphate. DNA-dependent RNA polymerase catalyzes the transcription of DNA into RNA using the four ribonucleoside triphosphates as substrates. In Listeria welshimeri serovar 6b (strain ATCC 35897 / DSM 20650 / CCUG 15529 / CIP 8149 / NCTC 11857 / SLCC 5334 / V8), this protein is DNA-directed RNA polymerase subunit beta'.